The following is a 208-amino-acid chain: Anti-sigma-W factor RsiW (208 aa).

Topologically, residues 1 to 87 are cytoplasmic; sequence MSCPEQIVQL…ASVKRWFRTH (87 aa). Zn(2+) contacts are provided by Cys-3, His-30, Cys-34, and Cys-37. A helical membrane pass occupies residues 88–108; sequence PVIAAAAVFIILMGGGFFNSW. The Extracellular segment spans residues 109-208; that stretch reads HNDHNFSVSK…LDAFNPNGEE (100 aa).

It belongs to the zinc-associated anti-sigma factor (ZAS) superfamily. Anti-sigma-W factor family. In terms of assembly, forms a heterodimer with cognate sigma factor SigW, which probably prevents SigW from binding to DNA. It depends on Zn(2+) as a cofactor. Post-translationally, is processed by successive proteolytic events. First, the extracellular region of RsiW is cleaved by PrsW (site-1 cleavage) in response to cell envelope stresses. In a reconstituted E.coli system PrsW cuts between Ala-168 and Ser-169 followed by trimming by E.coli Tsp; the endogenous extracellular exopeptidase responsible for the event in B.subtilis has not been identified. Next, it undergoes cleavage at an intramembrane site (site-2 cleavage) mediated by RasP. This cleavage uncovers a cryptic proteolytic tag with conserved alanine residues in the transmembrane segment, that is recognized mainly by the ClpXP protease, which completely degrades the protein in the cytoplasm and leads to the induction of the sigma-W-controlled genes.

It localises to the cell membrane. The anti-sigma factor for extracytoplasmic function (ECF) sigma factor sigma-W (SigW). Holds SigW, its cognate ECF sigma factor, in an inactive form until released by regulated intramembrane proteolysis (RIP). SigW and RsiW mediate cell response to cell wall stress. RIP occurs when an extracytoplasmic signal triggers a concerted proteolytic cascade to transmit information and elicit cellular responses. The membrane-spanning regulatory substrate protein is first cut periplasmically (site-1 protease, S1P, PrsW), then within the membrane itself (site-2 protease, S2P, RasP), while cytoplasmic proteases finish degrading the anti-sigma factor, liberating sigma-W. This is Anti-sigma-W factor RsiW (rsiW) from Bacillus subtilis (strain 168).